The sequence spans 208 residues: NAD(P)H-quinone oxidoreductase subunit M, chloroplastic (208 aa).

The transit peptide at 1-21 (MAATSSYTACTKFSMLGWIGG) directs the protein to the chloroplast. The span at 37–49 (QQAEVEESQQVNA) shows a compositional bias: low complexity. Positions 37–70 (QQAEVEESQQVNAQEEEQEKMKQQGKQKLPRPVE) are disordered.

The protein belongs to the NDH complex subunit M family. Part of the chloroplast NDH complex, composed of a mixture of chloroplast and nucleus encoded subunits. Component of the NDH subcomplex A, at least composed of ndhH, ndhI, ndhJ, ndhK, ndhL, ndhM, ndhN and ndhO.

Its subcellular location is the plastid. The protein localises to the chloroplast thylakoid membrane. The enzyme catalyses a plastoquinone + NADH + (n+1) H(+)(in) = a plastoquinol + NAD(+) + n H(+)(out). The catalysed reaction is a plastoquinone + NADPH + (n+1) H(+)(in) = a plastoquinol + NADP(+) + n H(+)(out). Its function is as follows. NDH shuttles electrons from NAD(P)H:plastoquinone, via FMN and iron-sulfur (Fe-S) centers, to quinones in the photosynthetic chain and possibly in a chloroplast respiratory chain. The immediate electron acceptor for the enzyme in this species is believed to be plastoquinone. Couples the redox reaction to proton translocation, and thus conserves the redox energy in a proton gradient. This Vitis vinifera (Grape) protein is NAD(P)H-quinone oxidoreductase subunit M, chloroplastic.